A 144-amino-acid polypeptide reads, in one-letter code: Noggin (144 aa).

The signal sequence occupies residues 1–4 (GGGG). Intrachain disulfides connect cysteine 67/cysteine 104, cysteine 90/cysteine 140, cysteine 96/cysteine 142, and cysteine 119/cysteine 127.

This sequence belongs to the noggin family. Homodimer. Interacts with GDF5; inhibits chondrocyte differentiation. As to expression, prominently expressed in the CNS. High levels found in mitral and tufted cells in the olfactory bulb, piriform cortex of the brain and Purkinje cells in the cerebellum. Low level expression seen in the lung, skeletal muscle and skin.

Its subcellular location is the secreted. In terms of biological role, essential for cartilage morphogenesis and joint formation. Inhibitor of bone morphogenetic proteins (BMP) signaling which is required for growth and patterning of the neural tube and somite. Inhibits chondrocyte differentiation through its interaction with GDF5 and, probably, GDF6. The sequence is that of Noggin (Nog) from Rattus norvegicus (Rat).